A 318-amino-acid polypeptide reads, in one-letter code: Ribosomal RNA small subunit methyltransferase H (318 aa).

S-adenosyl-L-methionine is bound by residues 38–40, D58, Y86, D107, and Q114; that span reads GGH.

Belongs to the methyltransferase superfamily. RsmH family.

It is found in the cytoplasm. The enzyme catalyses cytidine(1402) in 16S rRNA + S-adenosyl-L-methionine = N(4)-methylcytidine(1402) in 16S rRNA + S-adenosyl-L-homocysteine + H(+). Functionally, specifically methylates the N4 position of cytidine in position 1402 (C1402) of 16S rRNA. The protein is Ribosomal RNA small subunit methyltransferase H of Methylibium petroleiphilum (strain ATCC BAA-1232 / LMG 22953 / PM1).